The following is a 1336-amino-acid chain: MVSCWDTAVLPCALLGCLLLTGYCSGSKLKGPELSLKGTQHVMQAGQTLFLKCRGEAAHSWSLPTTVSQEDKKLSVTRSACGRNNRQFCSTLTLNMAQANHTGLYSCRYLPKSTSKEKKMESAIYIFVSDAGSPFIEMHSDIPKLVHMTEGRELIIPCRVTSPNITVTLKKFPFDALTPDGQRIAWDSRRGFIIANATYKEIGLLTCEATVNGHLYQTSYLTHRQTNTILDVQISPPSPVRFLRGQTLVLNCTVTTDLNTRVQMSWNYPGKATKRASIRQRIDQSNPHSNVFHSVLKINNVESRDKGLYTCRVKSGSSFRTFNTSVHVYEKGFISVKHRKQQVQETIAGKRSHRLSMKVKAFPSPEVVWLKDGVPATEKSARYSVHGYSLIIKDVTAEDAGDYTILLGIKQSKLFRNLTATLIVNVKPQIYEKSVSSLPSPPLYPLGSRQVLTCTVYGIPQPTIKWLWHPCHYNHSKERNDFCFGSEESFILDSSSNIGNRIEGITQRMMVIEGTNKTVSTLVVADSRTPGSYSCKAFNKIGTVERDIRFYVTDVPNGFHVSLEKIPTEGEDLKLSCVVSKFLYRDITWILLRTVNNRTMHHSISKQKMATTQDYSITLNLVIKNVSLEDSGTYACRARNIYTGEEILRKTEVLVRDLEAPLLLQNLSDHEVSISGSTTLDCQARGVPAPQITWFKNNHKIQQEPGIILGPGNSTLFIERVTEEDEGVYRCRATNQKGVVESSAYLTVQGTSDKSNLELITLTCTCVAATLFWLLLTLFIRKLKRSSSEVKTDYLSIIMDPDEVPLDEQCERLPYDASKWEFARERLKLGKSLGRGAFGKVVQASAFGIKKSPTCRTVAVKMLKEGATASEYKALMTELKILTHIGHHLNVVNLLGACTKQGGPLMVIVEYCKYGNLSNYLKSKRDFFCLNKDAALHMEPKKEKLEPDLEQDQKPRLDSVSSSESFTSSGFQEDKSVSDVEGGEDYSEISKQPLTMEDLISYSFQVARGMEFLSSRKCIHRDLAARNILLSENNVVKICDFGLARDIYKNPDYVRRGDTRLPLKWMAPESIFDKVYSTKSDVWSYGVLLWEIFSLGGSPYPGVQMDEDFCSRLKEGMRMRTPEYATPEIYQIMLDCWHKDPKERPRFAELVEKLGDLLQANVQQDGKDYIPLNAILTRNSGFTYSVPTFSEDFFKDGFTDPKFHSGSSDDVRYVNAFKFMSLERIKTFEELSPNATSMFEDYHLDTSSLLTSPLLKRFTWTETKPKASMKIDLRITSKSKEAGLSDLPGPSFCFSSCGHIRPVRQEDEDDPELGKESCCSPPPDYNSVVLYSSPPA.

An N-terminal signal peptide occupies residues 1–22 (MVSCWDTAVLPCALLGCLLLTG). Residues 23-758 (YCSGSKLKGP…QGTSDKSNLE (736 aa)) lie on the Extracellular side of the membrane. Ig-like C2-type domains lie at 32 to 121 (PELS…KKME), 151 to 214 (GREL…VNGH), 230 to 327 (LDVQ…TSVH), 335 to 421 (SVKH…LTAT), 429 to 549 (QIYE…RDIR), 556 to 655 (PNGF…EVLV), and 661 to 747 (PLLL…AYLT). Cystine bridges form between Cys-53/Cys-107 and Cys-158/Cys-207. Residues Asn-100, Asn-164, Asn-196, and Asn-251 are each glycosylated (N-linked (GlcNAc...) asparagine). A disulfide bond links Cys-252 and Cys-311. N-linked (GlcNAc...) asparagine glycosylation is found at Asn-323, Asn-417, Asn-474, Asn-516, Asn-597, Asn-625, Asn-666, and Asn-713. 2 cysteine pairs are disulfide-bonded: Cys-454-Cys-535 and Cys-577-Cys-636. Cys-682 and Cys-731 are joined by a disulfide. The helical transmembrane segment at 759-780 (LITLTCTCVAATLFWLLLTLFI) threads the bilayer. The Cytoplasmic portion of the chain corresponds to 781-1336 (RKLKRSSSEV…SVVLYSSPPA (556 aa)). Residues 827-1158 (LKLGKSLGRG…ELVEKLGDLL (332 aa)) enclose the Protein kinase domain. ATP is bound by residues 833-841 (LGRGAFGKV) and Lys-861. Tyr-914 bears the Phosphotyrosine; by autocatalysis mark. Residues 941-957 (KKEKLEPDLEQDQKPRL) are compositionally biased toward basic and acidic residues. A disordered region spans residues 941 to 982 (KKEKLEPDLEQDQKPRLDSVSSSESFTSSGFQEDKSVSDVEG). A compositionally biased stretch (low complexity) spans 959–969 (SVSSSESFTSS). Catalysis depends on Asp-1022, which acts as the Proton acceptor. Phosphotyrosine; by autocatalysis occurs at positions 1053, 1169, 1213, 1242, 1325, and 1331. The tract at residues 1304–1326 (RQEDEDDPELGKESCCSPPPDYN) is disordered.

Belongs to the protein kinase superfamily. Tyr protein kinase family. CSF-1/PDGF receptor subfamily. Interacts with VEGFA, VEGFB and PGF. Monomer in the absence of bound VEGFA, VEGFB or PGF. Homodimer in the presence of bound VEGFA, VEGFB and PGF. Can also form a heterodimer with KDR. Interacts (tyrosine phosphorylated) with CBL, CRK, GRB2, NCK1, PIK3R1, PLCG, PSEN1 and PTPN11. Probably interacts with PTPRB. Interacts with RACK1. Identified in a complex with CBL and CD2AP. Post-translationally, N-glycosylated. Ubiquitinated after VEGFA-mediated autophosphorylation, leading to proteolytic degradation. In terms of processing, autophosphorylated on tyrosine residues upon ligand binding. Autophosphorylation occurs in trans, i.e. one subunit of the dimeric receptor phosphorylates tyrosine residues on the other subunit. Phosphorylation at Tyr-1169 is important for interaction with PLCG. Phosphorylation at Tyr-1213 is important for interaction with PIK3R1, PTPN11, GRB2, and PLCG. Phosphorylation at Tyr-1331 is important for endocytosis and for interaction with CBL, NCK1 and CRK. Is probably dephosphorylated by PTPRB.

Its subcellular location is the cell membrane. The protein localises to the endosome. The enzyme catalyses L-tyrosyl-[protein] + ATP = O-phospho-L-tyrosyl-[protein] + ADP + H(+). Present in an inactive conformation in the absence of bound ligand. Binding of VEGFA, VEGFB or PGF leads to dimerization and activation by autophosphorylation on tyrosine residues. Its function is as follows. Tyrosine-protein kinase that acts as a cell-surface receptor for VEGFA, VEGFB and PGF, and plays an essential role in the development of embryonic vasculature, the regulation of angiogenesis, cell survival, cell migration, macrophage function, chemotaxis, and cancer cell invasion. Acts as a positive regulator of postnatal retinal hyaloid vessel regression. May play an essential role as a negative regulator of embryonic angiogenesis by inhibiting excessive proliferation of endothelial cells. Can promote endothelial cell proliferation, survival and angiogenesis in adulthood. Its function in promoting cell proliferation seems to be cell-type specific. Promotes PGF-mediated proliferation of endothelial cells, and proliferation of some types of cancer cells, but does not promote proliferation of normal fibroblasts. Has very high affinity for VEGFA and relatively low protein kinase activity; may function as a negative regulator of VEGFA signaling by limiting the amount of free VEGFA and preventing its binding to KDR. Modulates KDR signaling by forming heterodimers with KDR. Ligand binding leads to the activation of several signaling cascades. Activation of PLCG leads to the production of the cellular signaling molecules diacylglycerol and inositol 1,4,5-trisphosphate and the activation of protein kinase C. Mediates phosphorylation of PIK3R1, the regulatory subunit of phosphatidylinositol 3-kinase, leading to the activation of phosphatidylinositol kinase and the downstream signaling pathway. Mediates activation of MAPK1/ERK2, MAPK3/ERK1 and the MAP kinase signaling pathway, as well as of the AKT1 signaling pathway. Phosphorylates SRC, YES1 and PLCG, and may also phosphorylate CBL. Promotes phosphorylation of AKT1 and PTK2/FAK1. This chain is Vascular endothelial growth factor receptor 1 (Flt1), found in Rattus norvegicus (Rat).